The primary structure comprises 923 residues: Progesterone receptor (923 aa).

The segment covering 1 to 11 (MTELQAKDPRT) has biased composition (basic and acidic residues). Positions 1–49 (MTELQAKDPRTLHTSGAAPSPTHVGSPLLARLDPDPFQGSQHSDASSVV) are disordered. The interval 1–164 (MTELQAKDPR…PATKGLLSPL (164 aa)) is AF3; mediates transcriptional activation (in isoform B). The interval 1–556 (MTELQAKDPR…YGFDSLPQKI (556 aa)) is modulating, Pro-Rich. Lys-7 is covalently cross-linked (Glycyl lysine isopeptide (Lys-Gly) (interchain with G-Cter in SUMO)). At Ser-20 the chain carries Phosphoserine. Residues 38 to 49 (QGSQHSDASSVV) are compositionally biased toward polar residues. An LXXL motif 1 motif is present at residues 56–60 (LDRLL). Residues 67–111 (AQELPDEKTQNQQSLSDVEGAFSGVEASRRRSRNPRAPEKDSRLL) are disordered. Ser-82 carries the post-translational modification Phosphoserine. An LXXL motif 2 motif is present at residues 115–119 (LDTLL). Phosphoserine is present on residues Ser-130 and Ser-162. Residues 152–239 (RSVPATKGLL…EGSAGPLLKS (88 aa)) form a disordered region. Residues 165–304 (MSRPESKAGD…LATTVVDFIH (140 aa)) are mediates transcriptional transrepression (in isoform A). The Nuclear localization signal motif lies at 184–188 (VLPKA). Ser-190 and Ser-213 each carry phosphoserine. Ser-293 carries the phosphoserine; by MAPK1 modification. The disordered stretch occupies residues 333–371 (AAQVPFAPPRGSPSAPSPPVPCGDFPDCTYPPEGDPKED). Pro residues predominate over residues 338–353 (FAPPRGSPSAPSPPVP). Phosphoserine; by MAPK is present on Ser-344. A Glycyl lysine isopeptide (Lys-Gly) (interchain with G-Cter in SUMO); alternate cross-link involves residue Lys-387. Residue Lys-387 forms a Glycyl lysine isopeptide (Lys-Gly) (interchain with G-Cter in ubiquitin); alternate linkage. A Phosphoserine; by CDK2 modification is found at Ser-399. The tract at residues 412–435 (TFPDFPLPPRPPRAPPSRPGEAAV) is disordered. Residues 416–429 (FPLPPRPPRAPPSR) show a composition bias toward pro residues. Residues 450–536 (SALECILYKA…VYPPYLNYLR (87 aa)) form an AF1; mediates transcriptional activation region. Lys-521 participates in a covalent cross-link: Glycyl lysine isopeptide (Lys-Gly) (interchain with G-Cter in SUMO). NR C4-type zinc fingers lie at residues 557–577 (CLIC…CGSC) and 593–617 (CAGR…LRKC). Residues 557–629 (CLICGDEASG…AGMVLGGRKF (73 aa)) constitute a DNA-binding region (nuclear receptor). The residue at position 666 (Ser-666) is a Phosphoserine. Positions 669–903 (QEIQLVPPLI…EFPEMMSEVI (235 aa)) constitute an NR LBD domain. Positions 677–923 (LINLLMSIEP…MVKPLLFHKK (247 aa)) are AF2; mediates transcriptional activation. Arg-756 lines the progesterone pocket.

It belongs to the nuclear hormone receptor family. NR3 subfamily. As to quaternary structure, interacts with SMARD1 and UNC45A. Interacts with CUEDC2; the interaction promotes ubiquitination, decreases sumoylation, and represses transcriptional activity. Interacts with PIAS3; the interaction promotes sumoylation of PR in a hormone-dependent manner, inhibits DNA-binding, and alters nuclear export. Interacts with SP1; the interaction requires ligand-induced phosphorylation on Ser-344. Interacts with PRMT2. Isoform A interacts with NCOR2. Isoform B (but not isoform A) interacts with NCOA2 and NCOA1. Isoform B (but not isoform A) interacts with KLF9. Interacts with GTF2B. Phosphorylated on multiple serine sites. Several of these sites are hormone-dependent. Phosphorylation on Ser-293 is highly hormone-dependent and modulates ubiquitination and sumoylation on Lys-387. Phosphorylation on Ser-344 also requires induction by hormone. Basal phosphorylation on Ser-82, Ser-190 and Ser-399 is increased in response to progesterone and can be phosphorylated in vitro by the CDK2-A1 complex. Increased levels of phosphorylation on Ser-399 also in the presence of EGF, heregulin, IGF, PMA and FBS. Phosphorylation at this site by CDK2 is ligand-independent, and increases nuclear translocation and transcriptional activity. Phosphorylation at Ser-293, but not at Ser-190, is impaired during the G(2)/M phase of the cell cycle. Phosphorylation on Ser-344 by ERK1/2 MAPK is required for interaction with SP1. In terms of processing, sumoylation is hormone-dependent and represses transcriptional activity. Sumoylation on all three sites is enhanced by PIAS3. Desumoylated by SENP1. Sumoylation on Lys-387, the main site of sumoylation, is repressed by ubiquitination on the same site, and modulated by phosphorylation at Ser-293. Post-translationally, ubiquitination is hormone-dependent and represses sumoylation on the same site. Promoted by MAPK-mediated phosphorylation on Ser-293. Ubiquitinated by UBR5, leading to its degradation: UBR5 specifically recognizes and binds ligand-bound PGR when it is not associated with coactivators (NCOAs). In presence of NCOAs, the UBR5-degron is not accessible, preventing its ubiquitination and degradation. Palmitoylated by ZDHHC7 and ZDHHC21. Palmitoylation is required for plasma membrane targeting and for rapid intracellular signaling via ERK and AKT kinases and cAMP generation. Isoform A and isoform B are expressed in the pituitary.

The protein localises to the nucleus. It localises to the cytoplasm. In terms of biological role, the steroid hormones and their receptors are involved in the regulation of eukaryotic gene expression and affect cellular proliferation and differentiation in target tissues. Depending on the isoform, progesterone receptor functions as a transcriptional activator or repressor. Ligand-dependent transdominant repressor of steroid hormone receptor transcriptional activity including repression of its isoform B, MR and ER. Transrepressional activity may involve recruitment of corepressor NCOR2. Its function is as follows. Transcriptional activator of several progesteron-dependent promoters in a variety of cell types. Involved in activation of SRC-dependent MAPK signaling on hormone stimulation. The protein is Progesterone receptor (Pgr) of Rattus norvegicus (Rat).